Here is a 684-residue protein sequence, read N- to C-terminus: Glycine--tRNA ligase beta subunit (684 aa).

The protein belongs to the class-II aminoacyl-tRNA synthetase family. In terms of assembly, tetramer of two alpha and two beta subunits.

It is found in the cytoplasm. The enzyme catalyses tRNA(Gly) + glycine + ATP = glycyl-tRNA(Gly) + AMP + diphosphate. This Pseudomonas savastanoi pv. phaseolicola (strain 1448A / Race 6) (Pseudomonas syringae pv. phaseolicola (strain 1448A / Race 6)) protein is Glycine--tRNA ligase beta subunit.